We begin with the raw amino-acid sequence, 355 residues long: UDP-N-acetylglucosamine--N-acetylmuramyl-(pentapeptide) pyrophosphoryl-undecaprenol N-acetylglucosamine transferase (355 aa).

Residues 14-16, Asn-126, Arg-162, Ser-190, Ile-243, 262-267, and Gln-287 contribute to the UDP-N-acetyl-alpha-D-glucosamine site; these read TGG and ALTVSE.

This sequence belongs to the glycosyltransferase 28 family. MurG subfamily.

It localises to the cell inner membrane. It catalyses the reaction di-trans,octa-cis-undecaprenyl diphospho-N-acetyl-alpha-D-muramoyl-L-alanyl-D-glutamyl-meso-2,6-diaminopimeloyl-D-alanyl-D-alanine + UDP-N-acetyl-alpha-D-glucosamine = di-trans,octa-cis-undecaprenyl diphospho-[N-acetyl-alpha-D-glucosaminyl-(1-&gt;4)]-N-acetyl-alpha-D-muramoyl-L-alanyl-D-glutamyl-meso-2,6-diaminopimeloyl-D-alanyl-D-alanine + UDP + H(+). It functions in the pathway cell wall biogenesis; peptidoglycan biosynthesis. In terms of biological role, cell wall formation. Catalyzes the transfer of a GlcNAc subunit on undecaprenyl-pyrophosphoryl-MurNAc-pentapeptide (lipid intermediate I) to form undecaprenyl-pyrophosphoryl-MurNAc-(pentapeptide)GlcNAc (lipid intermediate II). The chain is UDP-N-acetylglucosamine--N-acetylmuramyl-(pentapeptide) pyrophosphoryl-undecaprenol N-acetylglucosamine transferase from Vibrio vulnificus (strain CMCP6).